The chain runs to 572 residues: Proline dehydrogenase 1, mitochondrial (572 aa).

The span at 105–124 shows a compositional bias: low complexity; it reads NHSNQTNNVNNKNYNNNNNN. A disordered region spans residues 105 to 140; it reads NHSNQTNNVNNKNYNNNNNNFEKDDKFGPPNNQNNN.

It belongs to the proline oxidase family. It depends on FAD as a cofactor.

It is found in the mitochondrion matrix. It carries out the reaction L-proline + a quinone = (S)-1-pyrroline-5-carboxylate + a quinol + H(+). It participates in amino-acid degradation; L-proline degradation into L-glutamate; L-glutamate from L-proline: step 1/2. Functionally, converts proline to delta-1-pyrroline-5-carboxylate. This is Proline dehydrogenase 1, mitochondrial (prodh) from Dictyostelium discoideum (Social amoeba).